We begin with the raw amino-acid sequence, 287 residues long: Succinate--CoA ligase [ADP-forming] subunit alpha 2 (287 aa).

CoA contacts are provided by residues T17–Q20, K43, and I96–E98. Y159 lines the substrate pocket. The Tele-phosphohistidine intermediate role is filled by H246.

The protein belongs to the succinate/malate CoA ligase alpha subunit family. As to quaternary structure, heterotetramer of two alpha and two beta subunits.

It carries out the reaction succinate + ATP + CoA = succinyl-CoA + ADP + phosphate. It catalyses the reaction GTP + succinate + CoA = succinyl-CoA + GDP + phosphate. It participates in carbohydrate metabolism; tricarboxylic acid cycle; succinate from succinyl-CoA (ligase route): step 1/1. In terms of biological role, succinyl-CoA synthetase functions in the citric acid cycle (TCA), coupling the hydrolysis of succinyl-CoA to the synthesis of either ATP or GTP and thus represents the only step of substrate-level phosphorylation in the TCA. The alpha subunit of the enzyme binds the substrates coenzyme A and phosphate, while succinate binding and nucleotide specificity is provided by the beta subunit. The protein is Succinate--CoA ligase [ADP-forming] subunit alpha 2 of Archaeoglobus fulgidus (strain ATCC 49558 / DSM 4304 / JCM 9628 / NBRC 100126 / VC-16).